Reading from the N-terminus, the 107-residue chain is UPF0060 membrane protein Sala_0701 (107 aa).

The next 4 membrane-spanning stretches (helical) occupy residues 4-24 (FAYIGAALAEIAGCFAFWAWL), 30-50 (VWWVVPGIASLALFAYLLTLV), 60-80 (AAYGGVYIAAALLWLWAVEGA), and 87-107 (LIGAAVCLGGAAIILFGPRGG).

It belongs to the UPF0060 family.

Its subcellular location is the cell inner membrane. The chain is UPF0060 membrane protein Sala_0701 from Sphingopyxis alaskensis (strain DSM 13593 / LMG 18877 / RB2256) (Sphingomonas alaskensis).